Here is a 254-residue protein sequence, read N- to C-terminus: DNA repair protein RecO (254 aa).

The protein belongs to the RecO family.

In terms of biological role, involved in DNA repair and RecF pathway recombination. The chain is DNA repair protein RecO from Rhodopseudomonas palustris (strain BisB18).